Reading from the N-terminus, the 77-residue chain is RNA-binding protein Hfq (77 aa).

The Sm domain maps to 9 to 69 (DQFLNQLRKE…ISTFAPQKNV (61 aa)).

This sequence belongs to the Hfq family. Homohexamer.

Functionally, RNA chaperone that binds small regulatory RNA (sRNAs) and mRNAs to facilitate mRNA translational regulation in response to envelope stress, environmental stress and changes in metabolite concentrations. Also binds with high specificity to tRNAs. The protein is RNA-binding protein Hfq of Shouchella clausii (strain KSM-K16) (Alkalihalobacillus clausii).